The primary structure comprises 99 residues: MAVNPLDFLKNMSGFKDNIDNFKKEISQIVVCGRAGSDVVVVEMNGEFVVKKVVIKEEFFSDLDNEALEHMIKSAFNDAISKVKEEIKSKTMGSIPFGI.

It belongs to the YbaB/EbfC family. As to quaternary structure, homodimer.

Its subcellular location is the cytoplasm. The protein resides in the nucleoid. In terms of biological role, binds to DNA and alters its conformation. May be involved in regulation of gene expression, nucleoid organization and DNA protection. This is Nucleoid-associated protein EbfC from Borrelia turicatae (strain 91E135).